Here is an 802-residue protein sequence, read N- to C-terminus: Homeobox-leucine zipper protein ANTHOCYANINLESS 2 (802 aa).

Residues 71-143 (QPERGTNRGE…RKKRYHRHTP (73 aa)) are disordered. Basic and acidic residues predominate over residues 103-113 (RSREEEHESRS). Basic residues predominate over residues 133 to 142 (PRKKRYHRHT). Residues 134–193 (RKKRYHRHTPQQIQELESMFKECPHPDEKQRLELSKRLCLETRQVKFWFQNRRTQMKTQL) constitute a DNA-binding region (homeobox). Residues 182–221 (FQNRRTQMKTQLERHENALLRQENDKLRAENMSIREAMRN) adopt a coiled-coil conformation. Residues 315–546 (GIDQKSVLLE…LQRQCECLAI (232 aa)) enclose the START domain.

It belongs to the HD-ZIP homeobox family. Class IV subfamily. Interacts with AIL7/PLT7, ANT, BBM and AIL1. In terms of tissue distribution, expressed in roots, stems, leaves and floral buds.

It is found in the nucleus. Probable transcription factor involved in the regulation of the tissue-specific accumulation of anthocyanins and in cellular organization of the primary root. The sequence is that of Homeobox-leucine zipper protein ANTHOCYANINLESS 2 from Arabidopsis thaliana (Mouse-ear cress).